The sequence spans 503 residues: Maturase K (503 aa).

The protein belongs to the intron maturase 2 family. MatK subfamily.

It is found in the plastid. The protein resides in the chloroplast. Its function is as follows. Usually encoded in the trnK tRNA gene intron. Probably assists in splicing its own and other chloroplast group II introns. This is Maturase K from Agonis flexuosa (Australian willow myrtle).